A 1709-amino-acid chain; its full sequence is Sialoadhesin (1709 aa).

An N-terminal signal peptide occupies residues 1 to 19 (MGFLPKLLLLASFFPAGQA). Residues 20–136 (SWGVSSPQDV…DVKGTLVTVT (117 aa)) enclose the Ig-like V-type domain. Over 20 to 1641 (SWGVSSPQDV…ALHRLHQFQQ (1622 aa)) the chain is Extracellular. Cystine bridges form between Cys-36–Cys-166, Cys-41–Cys-98, Cys-160–Cys-217, and Cys-262–Cys-305. N-acetylneuraminate-binding positions include Tyr-63, Arg-116, and 122 to 126 (VNRWS). Ig-like C2-type domains lie at 139–233 (PRVP…IHLQ), 238–320 (PKGV…PPIS), 326–405 (AEVQ…GPVS), 411–507 (PPLT…LDFH), 511–593 (ARLL…AVLT), 601–705 (PTFT…ATFN), 708–785 (ATVL…AQLS), 799–894 (PKLS…FQVR), 898–977 (VQVS…APIS), 984–1083 (PRHV…ADFD), 1085–1165 (QAVN…RPIT), and 1176–1248 (RLTY…SPLG). An N-linked (GlcNAc...) asparagine glycan is attached at Asn-159. Asn-265 and Asn-339 each carry an N-linked (GlcNAc...) asparagine glycan. Intrachain disulfides connect Cys-346–Cys-390 and Cys-433–Cys-491. N-linked (GlcNAc...) asparagine glycosylation occurs at Asn-499. Disulfide bonds link Cys-531–Cys-575 and Cys-624–Cys-689. Asn-697, Asn-726, Asn-730, and Asn-741 each carry an N-linked (GlcNAc...) asparagine glycan. 2 disulfide bridges follow: Cys-729–Cys-774 and Cys-817–Cys-876. N-linked (GlcNAc...) asparagine glycosylation occurs at Asn-886. Cystine bridges form between Cys-916–Cys-960 and Cys-1005–Cys-1067. Asn-1104 and Asn-1138 each carry an N-linked (GlcNAc...) asparagine glycan. 2 disulfide bridges follow: Cys-1107-Cys-1149 and Cys-1193-Cys-1241. The N-linked (GlcNAc...) asparagine glycan is linked to Asn-1251. Ig-like C2-type domains follow at residues 1259–1341 (EGVR…AALQ), 1350–1442 (VLSS…RLQV), 1445–1528 (ARVV…VMLR), and 1536–1631 (PTMM…FGVR). Intrachain disulfides connect Cys-1281–Cys-1324 and Cys-1367–Cys-1425. 2 N-linked (GlcNAc...) asparagine glycosylation sites follow: Asn-1462 and Asn-1476. Intrachain disulfides connect Cys-1465-Cys-1511 and Cys-1554-Cys-1613. A helical membrane pass occupies residues 1642–1662 (LLWVLGLLVGLLLLLLGLGAC). The Cytoplasmic portion of the chain corresponds to 1663-1709 (YTWRRRRVCKQSMGENSVEMAFQKETTQLIDPDAATCETSTCAPPLG).

It belongs to the immunoglobulin superfamily. SIGLEC (sialic acid binding Ig-like lectin) family. As to quaternary structure, interacts with TYROBP. Interacts with CLEC10A. As to expression, expressed by macrophages in various tissues. High levels are found in spleen, lymph node, perivascular macrophages in brain and lower levels in bone marrow, liver Kupffer cells and lamina propria of colon and lung. Also expressed by inflammatory macrophages in rheumatoid arthritis.

Its subcellular location is the cell membrane. The protein resides in the secreted. Its function is as follows. Macrophage-restricted adhesion molecule that mediates sialic-acid dependent binding to lymphocytes, including granulocytes, monocytes, natural killer cells, B-cells and CD8 T-cells. Plays a crucial role in limiting bacterial dissemination by engaging sialylated bacteria to promote effective phagocytosis and antigen presentation for the adaptive immune response. Mediates the uptake of various enveloped viruses via sialic acid recognition and subsequently induces the formation of intracellular compartments filled with virions (VCCs). In turn, enhances macrophage-to-T-cell transmission of several viruses including HIV-1 or SARS-CoV-2. Acts as an endocytic receptor mediating clathrin dependent endocytosis. Preferentially binds to alpha-2,3-linked sialic acid. Binds to SPN/CD43 on T-cells. May play a role in hemopoiesis. Plays a role in the inhibition of antiviral innate immune by promoting TBK1 degradation via TYROBP and TRIM27-mediated ubiquitination. (Microbial infection) Facilitates viral cytoplasmic entry into activated dendritic cells via recognition of sialylated gangliosides pesent on viral membrane. The protein is Sialoadhesin (SIGLEC1) of Homo sapiens (Human).